The sequence spans 625 residues: tRNA uridine 5-carboxymethylaminomethyl modification enzyme MnmG (625 aa).

FAD-binding positions include 9 to 14, Val-121, and Ser-176; that span reads GGGHAG. NAD(+) is bound at residue 270 to 284; it reads GPRYCPSIEDKIYRF. Gln-367 lines the FAD pocket.

The protein belongs to the MnmG family. As to quaternary structure, homodimer. Heterotetramer of two MnmE and two MnmG subunits. Requires FAD as cofactor.

Its subcellular location is the cytoplasm. NAD-binding protein involved in the addition of a carboxymethylaminomethyl (cmnm) group at the wobble position (U34) of certain tRNAs, forming tRNA-cmnm(5)s(2)U34. This Nitratiruptor sp. (strain SB155-2) protein is tRNA uridine 5-carboxymethylaminomethyl modification enzyme MnmG.